Consider the following 318-residue polypeptide: Ribonuclease Z (318 aa).

His63, His65, Asp67, His68, His142, Asp213, and His273 together coordinate Zn(2+). Asp67 serves as the catalytic Proton acceptor.

It belongs to the RNase Z family. As to quaternary structure, homodimer. It depends on Zn(2+) as a cofactor.

The enzyme catalyses Endonucleolytic cleavage of RNA, removing extra 3' nucleotides from tRNA precursor, generating 3' termini of tRNAs. A 3'-hydroxy group is left at the tRNA terminus and a 5'-phosphoryl group is left at the trailer molecule.. Zinc phosphodiesterase, which displays some tRNA 3'-processing endonuclease activity. Probably involved in tRNA maturation, by removing a 3'-trailer from precursor tRNA. The protein is Ribonuclease Z of Leuconostoc mesenteroides subsp. mesenteroides (strain ATCC 8293 / DSM 20343 / BCRC 11652 / CCM 1803 / JCM 6124 / NCDO 523 / NBRC 100496 / NCIMB 8023 / NCTC 12954 / NRRL B-1118 / 37Y).